Consider the following 794-residue polypeptide: Putative neurotrophin receptor LTRK 1 (794 aa).

Residues 1–33 (MRGPRRFRLWTRANVLTVISILTSILSGAGCSP) form the signal peptide. Residues 34–419 (LSQLPSDNPA…PTEDFGPQTQ (386 aa)) lie on the Extracellular side of the membrane. Residues 36 to 102 (QLPSDNPAHV…DQVPGDASRN (67 aa)) are disordered. 3 N-linked (GlcNAc...) asparagine glycosylation sites follow: Asn-64, Asn-102, and Asn-128. 2 LRR repeats span residues 181–202 (CLKHLTIENCGLNNIQGIAFKT) and 205–226 (SLETINLRHNHLTEFPQELLRT). An LRRCT domain is found at 237–280 (NALTCSCTNLWLRSVDVAADRSEMTCSTRDGVSKMKMTQFKCEP). Residues Asn-288 and Asn-374 are each glycosylated (N-linked (GlcNAc...) asparagine). The helical transmembrane segment at 420–440 (VILPVVGVVILLISAVFIIYL) threads the bilayer. Residues 441–794 (CQRAKHRSHA…GDPVYIDIIA (354 aa)) are Cytoplasmic-facing. In terms of domain architecture, Protein kinase spans 504-775 (ILLMRVIGEG…PQDRLTMKDI (272 aa)). ATP contacts are provided by residues 510–518 (IGEGAFGRV) and Lys-538. The Proton acceptor role is filled by Asp-647. Phosphotyrosine; by autocatalysis occurs at positions 673, 677, 678, and 789.

It belongs to the protein kinase superfamily. Tyr protein kinase family. Insulin receptor subfamily. As to expression, expression is confined to the central nervous system and its associated endocrine tissues.

It is found in the membrane. The catalysed reaction is L-tyrosyl-[protein] + ATP = O-phospho-L-tyrosyl-[protein] + ADP + H(+). Its function is as follows. May bind an endogenous invertebrate neurotrophin. Binds human NT-3, but not NGF or BDNF. In Lymnaea stagnalis (Great pond snail), this protein is Putative neurotrophin receptor LTRK 1.